Reading from the N-terminus, the 269-residue chain is 5'-nucleotidase SurE (269 aa).

The a divalent metal cation site is built by Asp-11, Asp-12, Ser-43, and Asn-101.

This sequence belongs to the SurE nucleotidase family. Requires a divalent metal cation as cofactor.

The protein resides in the cytoplasm. The enzyme catalyses a ribonucleoside 5'-phosphate + H2O = a ribonucleoside + phosphate. Its function is as follows. Nucleotidase that shows phosphatase activity on nucleoside 5'-monophosphates. In Prochlorococcus marinus (strain MIT 9303), this protein is 5'-nucleotidase SurE.